Here is a 96-residue protein sequence, read N- to C-terminus: Co-chaperonin GroES (96 aa).

It belongs to the GroES chaperonin family. In terms of assembly, heptamer of 7 subunits arranged in a ring. Interacts with the chaperonin GroEL.

It localises to the cytoplasm. Its function is as follows. Together with the chaperonin GroEL, plays an essential role in assisting protein folding. The GroEL-GroES system forms a nano-cage that allows encapsulation of the non-native substrate proteins and provides a physical environment optimized to promote and accelerate protein folding. GroES binds to the apical surface of the GroEL ring, thereby capping the opening of the GroEL channel. This is Co-chaperonin GroES from Shewanella amazonensis (strain ATCC BAA-1098 / SB2B).